Reading from the N-terminus, the 439-residue chain is 3-phosphoshikimate 1-carboxyvinyltransferase (439 aa).

3-phosphoshikimate is bound by residues Lys29, Ser30, and Arg34. Phosphoenolpyruvate is bound at residue Lys29. Positions 100 and 128 each coordinate phosphoenolpyruvate. Positions 173, 174, 175, 201, 321, and 348 each coordinate 3-phosphoshikimate. Residue Gln175 participates in phosphoenolpyruvate binding. The active-site Proton acceptor is Asp321. Positions 352 and 395 each coordinate phosphoenolpyruvate.

The protein belongs to the EPSP synthase family. As to quaternary structure, monomer.

The protein localises to the cytoplasm. The enzyme catalyses 3-phosphoshikimate + phosphoenolpyruvate = 5-O-(1-carboxyvinyl)-3-phosphoshikimate + phosphate. The protein operates within metabolic intermediate biosynthesis; chorismate biosynthesis. In terms of biological role, catalyzes the transfer of the enolpyruvyl moiety of phosphoenolpyruvate (PEP) to the 5-hydroxyl of shikimate-3-phosphate (S3P) to produce enolpyruvyl shikimate-3-phosphate and inorganic phosphate. The sequence is that of 3-phosphoshikimate 1-carboxyvinyltransferase from Halobacterium salinarum (strain ATCC 700922 / JCM 11081 / NRC-1) (Halobacterium halobium).